A 119-amino-acid chain; its full sequence is Beta-2-microglobulin (119 aa).

The N-terminal stretch at 1-20 (MARSVVAALLVLLSLSGLEA) is a signal peptide. One can recognise an Ig-like C1-type domain in the interval 25 to 114 (PKIQVYSRHP…VTFPTPKTVK (90 aa)). An intrachain disulfide couples Cys45 to Cys100.

This sequence belongs to the beta-2-microglobulin family. In terms of assembly, heterodimer of an alpha chain and a beta chain. Beta-2-microglobulin is the beta-chain of major histocompatibility complex class I molecules.

It localises to the secreted. In terms of biological role, component of the class I major histocompatibility complex (MHC). Involved in the presentation of peptide antigens to the immune system. The chain is Beta-2-microglobulin (B2M) from Saimiri boliviensis boliviensis (Bolivian squirrel monkey).